Here is a 1119-residue protein sequence, read N- to C-terminus: Ubiquitin-associated protein 2 (1119 aa).

The interval 1 to 26 (MMTSVSSDHCRGAREKPQISAAQSTQ) is disordered. Residues 8 to 17 (DHCRGAREKP) show a composition bias toward basic and acidic residues. Residues 48–92 (KNDSDFEAKVKQLMEVTGKNQDECIVALHDCNGDVNKAINILLEG) form the UBA domain. Residues 105-130 (KKKNFAKENSENKENREKKSEKESSR) adopt a coiled-coil conformation. Residues 110 to 130 (AKENSENKENREKKSEKESSR) show a composition bias toward basic and acidic residues. Disordered regions lie at residues 110–202 (AKEN…YSDS), 385–476 (LGQF…SPST), 622–736 (VHNR…SSHQ), 853–905 (RDGS…VNPA), 937–966 (SAKQHGVNLSTPTPPFQQASGYGQHGYSTG), 982–1020 (GGYAGSSQAPNKSAGSGPGKGVSVSSSTTGLPDMTGSVY), and 1082–1119 (HLPQDAQSGSGQRSQPSSLQPKSQASKPAYGNSPYWTN). Arg166 is subject to Omega-N-methylarginine. Residues 168 to 182 (KRARGRGFGRGRGRG) show a composition bias toward basic residues. Residues 389 to 407 (TTTPSTQQNSTSHPTTTTS) are compositionally biased toward low complexity. Residues Ser432, Ser439, Ser473, and Ser630 each carry the phosphoserine modification. Positions 435–447 (LSQLSQRQQHQSQ) are enriched in low complexity. The span at 651–662 (SQQTLDTPKTTG) shows a compositional bias: polar residues. The segment covering 663 to 678 (PPSALPSVSSLPSTTS) has biased composition (low complexity). The span at 679 to 694 (CTALLPSTSQHTGDLT) shows a compositional bias: polar residues. Low complexity-rich tracts occupy residues 695 to 736 (SSPL…SSHQ) and 874 to 900 (SASPAPATTPAQPQQSQSQTHHTAQQP). The span at 943-957 (VNLSTPTPPFQQASG) shows a compositional bias: polar residues. 2 stretches are compositionally biased toward low complexity: residues 1002 to 1011 (GVSVSSSTTG) and 1088 to 1102 (QSGSGQRSQPSSLQP).

In terms of assembly, may interact with ANXA2.

It is found in the nucleus. Its subcellular location is the chromosome. It localises to the cytoplasm. Recruits the ubiquitination machinery to RNA polymerase II for polyubiquitination, removal and degradation, when the transcription-coupled nucleotide excision repair (TC-NER) machinery fails to resolve DNA damage. May promote the degradation of ANXA2. This chain is Ubiquitin-associated protein 2, found in Homo sapiens (Human).